A 156-amino-acid chain; its full sequence is Small ribosomal subunit protein uS7 (156 aa).

This sequence belongs to the universal ribosomal protein uS7 family. Part of the 30S ribosomal subunit. Contacts proteins S9 and S11.

Functionally, one of the primary rRNA binding proteins, it binds directly to 16S rRNA where it nucleates assembly of the head domain of the 30S subunit. Is located at the subunit interface close to the decoding center, probably blocks exit of the E-site tRNA. The sequence is that of Small ribosomal subunit protein uS7 from Nocardioides sp. (strain ATCC BAA-499 / JS614).